Consider the following 267-residue polypeptide: tRNA pseudouridine synthase A (267 aa).

Asp-51 (nucleophile) is an active-site residue. Tyr-109 serves as a coordination point for substrate.

The protein belongs to the tRNA pseudouridine synthase TruA family.

The catalysed reaction is uridine(38/39/40) in tRNA = pseudouridine(38/39/40) in tRNA. Functionally, formation of pseudouridine at positions 38, 39 and 40 in the anticodon stem and loop of transfer RNAs. The chain is tRNA pseudouridine synthase A from Methanothrix thermoacetophila (strain DSM 6194 / JCM 14653 / NBRC 101360 / PT) (Methanosaeta thermophila).